The following is a 160-amino-acid chain: Protein-export protein SecB (160 aa).

This sequence belongs to the SecB family. Homotetramer, a dimer of dimers. One homotetramer interacts with 1 SecA dimer.

It is found in the cytoplasm. Functionally, one of the proteins required for the normal export of preproteins out of the cell cytoplasm. It is a molecular chaperone that binds to a subset of precursor proteins, maintaining them in a translocation-competent state. It also specifically binds to its receptor SecA. This chain is Protein-export protein SecB, found in Aliivibrio salmonicida (strain LFI1238) (Vibrio salmonicida (strain LFI1238)).